A 946-amino-acid chain; its full sequence is Bifunctional glutamine synthetase adenylyltransferase/adenylyl-removing enzyme (946 aa).

The tract at residues Met-1–Glu-441 is adenylyl removase. The tract at residues Asp-448–Asp-946 is adenylyl transferase.

This sequence belongs to the GlnE family. Requires Mg(2+) as cofactor.

The enzyme catalyses [glutamine synthetase]-O(4)-(5'-adenylyl)-L-tyrosine + phosphate = [glutamine synthetase]-L-tyrosine + ADP. It carries out the reaction [glutamine synthetase]-L-tyrosine + ATP = [glutamine synthetase]-O(4)-(5'-adenylyl)-L-tyrosine + diphosphate. Involved in the regulation of glutamine synthetase GlnA, a key enzyme in the process to assimilate ammonia. When cellular nitrogen levels are high, the C-terminal adenylyl transferase (AT) inactivates GlnA by covalent transfer of an adenylyl group from ATP to specific tyrosine residue of GlnA, thus reducing its activity. Conversely, when nitrogen levels are low, the N-terminal adenylyl removase (AR) activates GlnA by removing the adenylyl group by phosphorolysis, increasing its activity. The regulatory region of GlnE binds the signal transduction protein PII (GlnB) which indicates the nitrogen status of the cell. This Psychromonas ingrahamii (strain DSM 17664 / CCUG 51855 / 37) protein is Bifunctional glutamine synthetase adenylyltransferase/adenylyl-removing enzyme.